The chain runs to 750 residues: Photosystem I P700 chlorophyll a apoprotein A1 (750 aa).

8 helical membrane-spanning segments follow: residues 70–93, 156–179, 195–219, 291–309, 346–369, 385–411, 433–455, and 531–549; these read VFSAHFGQLSIIFLWLSGMYFHGA, LYCTAIGALVFAALMLFAGWFHYH, LNHHLAGLLGLGSLSWAGHQVHVSL, IAHHHLAIAILFLVAGHMY, WHAQLSLNLAMLGSLTIVVAHHMY, LSLFTHHMWIGGFLIVGAAAHAAIFMV, AIISHLNWVCIFLGFHSFGLYIH, and FLVHHIHAFTIHVTVLILL. [4Fe-4S] cluster is bound by residues Cys573 and Cys582. The next 2 helical transmembrane spans lie at 589–610 and 664–686; these read HVFLGLFWMYNAISVVIFHFSW and LSAYGLFFLGAHFVWAFSLMFLF. His675 contacts chlorophyll a'. Residues Met683 and Tyr691 each coordinate chlorophyll a. Residue Trp692 participates in phylloquinone binding. A helical membrane pass occupies residues 724 to 744; the sequence is AVGVTHYLLGGIATTWAFFLA.

It belongs to the PsaA/PsaB family. As to quaternary structure, the PsaA/B heterodimer binds the P700 chlorophyll special pair and subsequent electron acceptors. PSI consists of a core antenna complex that captures photons, and an electron transfer chain that converts photonic excitation into a charge separation. The eukaryotic PSI reaction center is composed of at least 11 subunits. P700 is a chlorophyll a/chlorophyll a' dimer, A0 is one or more chlorophyll a, A1 is one or both phylloquinones and FX is a shared 4Fe-4S iron-sulfur center. serves as cofactor.

The protein localises to the plastid. It localises to the chloroplast thylakoid membrane. The enzyme catalyses reduced [plastocyanin] + hnu + oxidized [2Fe-2S]-[ferredoxin] = oxidized [plastocyanin] + reduced [2Fe-2S]-[ferredoxin]. Functionally, psaA and PsaB bind P700, the primary electron donor of photosystem I (PSI), as well as the electron acceptors A0, A1 and FX. PSI is a plastocyanin-ferredoxin oxidoreductase, converting photonic excitation into a charge separation, which transfers an electron from the donor P700 chlorophyll pair to the spectroscopically characterized acceptors A0, A1, FX, FA and FB in turn. Oxidized P700 is reduced on the lumenal side of the thylakoid membrane by plastocyanin. The sequence is that of Photosystem I P700 chlorophyll a apoprotein A1 from Populus trichocarpa (Western balsam poplar).